The following is a 37-amino-acid chain: Large ribosomal subunit protein bL36 (37 aa).

Belongs to the bacterial ribosomal protein bL36 family.

The chain is Large ribosomal subunit protein bL36 from Nitratiruptor sp. (strain SB155-2).